A 70-amino-acid chain; its full sequence is MKLTCVLIIAVLILTACQFIAADNTEYRKWRRSGTSTGMRLGSRDCGPWCWGQNKCCPDESCRSLHESCT.

Positions 1–22 (MKLTCVLIIAVLILTACQFIAA) are cleaved as a signal peptide. Positions 23–43 (DNTEYRKWRRSGTSTGMRLGS) are excised as a propeptide. Cystine bridges form between cysteine 46–cysteine 57, cysteine 50–cysteine 62, and cysteine 56–cysteine 69. 4-hydroxyproline occurs at positions 48 and 58. A 4-carboxyglutamate mark is found at glutamate 60 and glutamate 67.

Belongs to the conotoxin O1 superfamily. Expressed by the venom duct.

Its subcellular location is the secreted. Probable neurotoxin with unknown target. Possibly targets ion channels. The chain is Conotoxin Cal6.11 from Californiconus californicus (California cone).